Here is a 294-residue protein sequence, read N- to C-terminus: ATP synthase gamma chain (294 aa).

The protein belongs to the ATPase gamma chain family. In terms of assembly, F-type ATPases have 2 components, CF(1) - the catalytic core - and CF(0) - the membrane proton channel. CF(1) has five subunits: alpha(3), beta(3), gamma(1), delta(1), epsilon(1). CF(0) has three main subunits: a, b and c.

It is found in the cell inner membrane. Produces ATP from ADP in the presence of a proton gradient across the membrane. The gamma chain is believed to be important in regulating ATPase activity and the flow of protons through the CF(0) complex. The polypeptide is ATP synthase gamma chain (Campylobacter jejuni subsp. jejuni serotype O:2 (strain ATCC 700819 / NCTC 11168)).